Here is a 648-residue protein sequence, read N- to C-terminus: Probable alpha-galactosidase D (648 aa).

The signal sequence occupies residues 1–16; the sequence is MEFIVSLLLLSPALVA. N-linked (GlcNAc...) asparagine glycans are attached at residues Asn84 and Asn90. Residues Cys123 and Cys156 are joined by a disulfide bond. The active-site Nucleophile is Asp154. 199–203 provides a ligand contact to substrate; that stretch reads EWGID. Asp221 serves as the catalytic Proton donor. 4 N-linked (GlcNAc...) asparagine glycosylation sites follow: Asn339, Asn350, Asn505, and Asn572.

This sequence belongs to the glycosyl hydrolase 27 family.

It is found in the secreted. It catalyses the reaction Hydrolysis of terminal, non-reducing alpha-D-galactose residues in alpha-D-galactosides, including galactose oligosaccharides, galactomannans and galactolipids.. Functionally, hydrolyzes a variety of simple alpha-D-galactoside as well as more complex molecules such as oligosaccharides and polysaccharides. The sequence is that of Probable alpha-galactosidase D (aglD) from Aspergillus fumigatus (strain CBS 144.89 / FGSC A1163 / CEA10) (Neosartorya fumigata).